A 408-amino-acid polypeptide reads, in one-letter code: LL-diaminopimelate aminotransferase (408 aa).

Substrate is bound by residues Tyr15 and Gly42. Residues Tyr72, 108 to 109, Tyr132, Asn187, Tyr218, and 246 to 248 contribute to the pyridoxal 5'-phosphate site; these read SK and SFS. Substrate-binding residues include Lys109, Tyr132, and Asn187. Lys249 carries the N6-(pyridoxal phosphate)lysine modification. Arg257 and Asn292 together coordinate pyridoxal 5'-phosphate. Positions 292 and 388 each coordinate substrate.

It belongs to the class-I pyridoxal-phosphate-dependent aminotransferase family. LL-diaminopimelate aminotransferase subfamily. Homodimer. The cofactor is pyridoxal 5'-phosphate.

It catalyses the reaction (2S,6S)-2,6-diaminopimelate + 2-oxoglutarate = (S)-2,3,4,5-tetrahydrodipicolinate + L-glutamate + H2O + H(+). The protein operates within amino-acid biosynthesis; L-lysine biosynthesis via DAP pathway; LL-2,6-diaminopimelate from (S)-tetrahydrodipicolinate (aminotransferase route): step 1/1. Functionally, involved in the synthesis of meso-diaminopimelate (m-DAP or DL-DAP), required for both lysine and peptidoglycan biosynthesis. Catalyzes the direct conversion of tetrahydrodipicolinate to LL-diaminopimelate. The polypeptide is LL-diaminopimelate aminotransferase (Prochlorococcus marinus (strain MIT 9313)).